Reading from the N-terminus, the 472-residue chain is UDP-glycosyltransferase 100 (472 aa).

Catalysis depends on histidine 15, which acts as the Proton acceptor. Histidine 15 serves as a coordination point for an anthocyanidin. The Charge relay role is filled by aspartate 117. Alanine 344, glutamine 346, histidine 361, tryptophan 364, asparagine 365, serine 366, and glutamate 369 together coordinate UDP-alpha-D-glucose. An an anthocyanidin-binding site is contributed by glycine 384. Positions 385 and 386 each coordinate UDP-alpha-D-glucose.

This sequence belongs to the UDP-glycosyltransferase family.

It carries out the reaction (20S)-protopanaxadiol + UDP-alpha-D-glucose = (20S)-ginsenoside C-K + UDP + H(+). The catalysed reaction is (20S)-protopanaxatriol + UDP-alpha-D-glucose = (20S)-ginsenoside Rh1 + UDP + H(+). It catalyses the reaction (20S)-ginsenoside F1 + UDP-alpha-D-glucose = (20S)-ginsenoside Rg1 + UDP + H(+). The protein operates within secondary metabolite biosynthesis; terpenoid biosynthesis. Functionally, component of the dammarane-type triterpene saponins (e.g. PPT-type ginsenosides or panaxosides) biosynthetic pathway. Glycosyltransferase that catalyzes the biosynthesis of ginsenoside Rh1 from protopanaxatriol (PPT) and the conversion of ginsenoside F1 to ginsenoside Rg1. The polypeptide is UDP-glycosyltransferase 100 (Panax ginseng (Korean ginseng)).